The following is a 309-amino-acid chain: GTP cyclohydrolase MptA (309 aa).

The protein belongs to the GTP cyclohydrolase IV family. As to quaternary structure, homodimer. Fe(2+) is required as a cofactor.

It carries out the reaction GTP + H2O = 7,8-dihydroneopterin 2',3'-cyclic phosphate + formate + diphosphate + H(+). It functions in the pathway cofactor biosynthesis; 5,6,7,8-tetrahydromethanopterin biosynthesis. Functionally, converts GTP to 7,8-dihydro-D-neopterin 2',3'-cyclic phosphate, the first intermediate in the biosynthesis of coenzyme methanopterin. The sequence is that of GTP cyclohydrolase MptA from Haloquadratum walsbyi (strain DSM 16790 / HBSQ001).